A 197-amino-acid polypeptide reads, in one-letter code: MVLVTQNAPNFIAPAILKNNQIVEQFDLKKYSNGQSTVLFFWPMDFTFVCPSEIIEFNKLHSEFKKRNVKIVGVSIDSVYVHQAWQNTLPKNGGIGKINFPMVSDVKHDIQKSYGIQHPNLGIALRASFLIDSNWIIRHQVVNDLPFGRNITDMIRMVDALDFHNKFGEVCPANWKKGEEGITASSEGVSQYLSKYS.

Positions 2–163 (VLVTQNAPNF…MIRMVDALDF (162 aa)) constitute a Thioredoxin domain. C50 (cysteine sulfenic acid (-SOH) intermediate) is an active-site residue.

Belongs to the peroxiredoxin family. AhpC/Prx1 subfamily. In terms of assembly, homodimer; disulfide-linked, upon oxidation. 5 homodimers assemble to form a ring-like decamer.

It localises to the cytoplasm. It catalyses the reaction a hydroperoxide + NADH + H(+) = an alcohol + NAD(+) + H2O. Thiol-specific peroxidase that catalyzes the reduction of hydrogen peroxide and organic hydroperoxides to water and alcohols, respectively. Plays a role in cell protection against oxidative stress by detoxifying peroxides. The polypeptide is Alkyl hydroperoxide reductase C (Buchnera aphidicola subsp. Acyrthosiphon pisum (strain APS) (Acyrthosiphon pisum symbiotic bacterium)).